The chain runs to 179 residues: UPF0316 protein BH0621 (179 aa).

A run of 3 helical transmembrane segments spans residues 9-29 (ALTM…LFTV), 41-61 (LAAT…SLVL), and 67-87 (IENL…GMKV).

Belongs to the UPF0316 family.

It is found in the cell membrane. The polypeptide is UPF0316 protein BH0621 (Halalkalibacterium halodurans (strain ATCC BAA-125 / DSM 18197 / FERM 7344 / JCM 9153 / C-125) (Bacillus halodurans)).